Here is a 687-residue protein sequence, read N- to C-terminus: Mediator of RNA polymerase II transcription subunit 17 (687 aa).

Positions 30–43 (LSSNPNSSLHSPTS) are enriched in low complexity. Disordered regions lie at residues 30-70 (LSSN…NKTK) and 130-189 (QLGS…ETDD). Composition is skewed to basic and acidic residues over residues 56–70 (TSIR…NKTK), 136–147 (SDGHNSEKKDTD), and 167–183 (KDNP…KTNE).

The protein belongs to the Mediator complex subunit 17 family. As to quaternary structure, component of the Mediator complex, which is composed of at least 21 subunits that form three structurally distinct submodules. The Mediator head module contains MED6, MED8, MED11, SRB4/MED17, SRB5/MED18, ROX3/MED19, SRB2/MED20 and SRB6/MED22, the middle module contains MED1, MED4, NUT1/MED5, MED7, CSE2/MED9, NUT2/MED10, SRB7/MED21 and SOH1/MED31, and the tail module contains MED2, PGD1/MED3, RGR1/MED14, GAL11/MED15 and SIN4/MED16. The head and the middle modules interact directly with RNA polymerase II, whereas the elongated tail module interacts with gene-specific regulatory proteins. The head module may also interact with the TFIIF complex. SRB4/MED17 interacts directly with MED6, MED11, ROX3/MED19, SRB2/MED20 and SRB6/MED22. Interacts directly with the activator GAL4.

The protein resides in the nucleus. Its function is as follows. Component of the Mediator complex, a coactivator involved in the regulated transcription of nearly all RNA polymerase II-dependent genes. Mediator functions as a bridge to convey information from gene-specific regulatory proteins to the basal RNA polymerase II transcription machinery. The Mediator complex, having a compact conformation in its free form, is recruited to promoters by direct interactions with regulatory proteins and serves for the assembly of a functional preinitiation complex with RNA polymerase II and the general transcription factors. The Mediator complex unfolds to an extended conformation and partially surrounds RNA polymerase II, specifically interacting with the unphosphorylated form of the C-terminal domain (CTD) of RNA polymerase II. The Mediator complex dissociates from the RNA polymerase II holoenzyme and stays at the promoter when transcriptional elongation begins. The protein is Mediator of RNA polymerase II transcription subunit 17 (SRB4) of Saccharomyces cerevisiae (strain ATCC 204508 / S288c) (Baker's yeast).